The following is a 726-amino-acid chain: Amino-acid acetyltransferase, mitochondrial (726 aa).

A compositionally biased stretch (polar residues) spans 1-18; it reads MSSRTLVGLRSTTSTHLQ. The transit peptide at 1–44 directs the protein to the mitochondrion; sequence MSSRTLVGLRSTTSTHLQRSGVAAAAAVSSSSTSSSGSAPRRCL. Residues 1 to 64 are disordered; it reads MSSRTLVGLR…SAEFSSSSKS (64 aa). A compositionally biased stretch (low complexity) spans 20–39; that stretch reads SGVAAAAAVSSSSTSSSGSA. The span at 45 to 58 shows a compositional bias: polar residues; that stretch reads SSASGRQVQQSAEF. The 170-residue stretch at 547–716 folds into the N-acetyltransferase domain; the sequence is DRPRLGLDDP…YEAVCRSIQP (170 aa).

This sequence belongs to the acetyltransferase family.

The protein localises to the mitochondrion. It catalyses the reaction L-glutamate + acetyl-CoA = N-acetyl-L-glutamate + CoA + H(+). Its pathway is amino-acid biosynthesis; L-arginine biosynthesis; N(2)-acetyl-L-ornithine from L-glutamate: step 1/4. In terms of biological role, N-acetylglutamate synthase involved in arginine biosynthesis. This Aspergillus niger (strain ATCC MYA-4892 / CBS 513.88 / FGSC A1513) protein is Amino-acid acetyltransferase, mitochondrial (arg2).